Here is a 415-residue protein sequence, read N- to C-terminus: Serine hydroxymethyltransferase 1 (415 aa).

(6S)-5,6,7,8-tetrahydrofolate-binding positions include leucine 122 and 126-128; that span reads GHL. Lysine 230 is modified (N6-(pyridoxal phosphate)lysine).

Belongs to the SHMT family. As to quaternary structure, homodimer. Requires pyridoxal 5'-phosphate as cofactor.

It localises to the cytoplasm. It carries out the reaction (6R)-5,10-methylene-5,6,7,8-tetrahydrofolate + glycine + H2O = (6S)-5,6,7,8-tetrahydrofolate + L-serine. It functions in the pathway one-carbon metabolism; tetrahydrofolate interconversion. It participates in amino-acid biosynthesis; glycine biosynthesis; glycine from L-serine: step 1/1. In terms of biological role, catalyzes the reversible interconversion of serine and glycine with tetrahydrofolate (THF) serving as the one-carbon carrier. This reaction serves as the major source of one-carbon groups required for the biosynthesis of purines, thymidylate, methionine, and other important biomolecules. Also exhibits THF-independent aldolase activity toward beta-hydroxyamino acids, producing glycine and aldehydes, via a retro-aldol mechanism. This is Serine hydroxymethyltransferase 1 from Ralstonia nicotianae (strain ATCC BAA-1114 / GMI1000) (Ralstonia solanacearum).